A 149-amino-acid chain; its full sequence is Azurin (149 aa).

A signal peptide spans 1-20 (MLAKATLAIVLSAASLPVLA). Residues 21–149 (AQCEATIESN…MMKGTLKLSN (129 aa)) form the Plastocyanin-like domain. A disulfide bridge connects residues Cys-23 and Cys-46. Cu cation is bound by residues His-66, Cys-132, His-137, and Met-141.

Its subcellular location is the periplasm. Functionally, transfers electrons from cytochrome c551 to cytochrome oxidase. The chain is Azurin (azu) from Achromobacter denitrificans (Alcaligenes denitrificans).